The primary structure comprises 263 residues: Acyl-[acyl-carrier-protein]--UDP-N-acetylglucosamine O-acyltransferase (263 aa).

This sequence belongs to the transferase hexapeptide repeat family. LpxA subfamily. In terms of assembly, homotrimer.

Its subcellular location is the cytoplasm. The enzyme catalyses a (3R)-hydroxyacyl-[ACP] + UDP-N-acetyl-alpha-D-glucosamine = a UDP-3-O-[(3R)-3-hydroxyacyl]-N-acetyl-alpha-D-glucosamine + holo-[ACP]. Its pathway is glycolipid biosynthesis; lipid IV(A) biosynthesis; lipid IV(A) from (3R)-3-hydroxytetradecanoyl-[acyl-carrier-protein] and UDP-N-acetyl-alpha-D-glucosamine: step 1/6. Functionally, involved in the biosynthesis of lipid A, a phosphorylated glycolipid that anchors the lipopolysaccharide to the outer membrane of the cell. In Campylobacter jejuni subsp. jejuni serotype O:6 (strain 81116 / NCTC 11828), this protein is Acyl-[acyl-carrier-protein]--UDP-N-acetylglucosamine O-acyltransferase.